The primary structure comprises 307 residues: Nicotinamide/nicotinic acid mononucleotide adenylyltransferase 2 (307 aa).

2 residues coordinate NAD(+): S16 and F17. H24 is an ATP binding site. The NAD(+) site is built by W92 and T95. 2 S-palmitoyl cysteine lipidation sites follow: C164 and C165. Residues G200, D202, L212, W213, and R232 each coordinate NAD(+). An ATP-binding site is contributed by 271–274 (TKSR).

Belongs to the eukaryotic NMN adenylyltransferase family. Monomer. Requires Mg(2+) as cofactor. Degraded in response to injured neurite. Degradation is caused by polyubiquitination by MYCBP2 after recognition by FBXO45. In terms of processing, palmitoylated; palmitoylation is required for membrane association.

It is found in the golgi apparatus membrane. The protein localises to the cytoplasmic vesicle membrane. Its subcellular location is the cytoplasm. It localises to the cell projection. The protein resides in the axon. The enzyme catalyses beta-nicotinamide D-ribonucleotide + ATP + H(+) = diphosphate + NAD(+). It carries out the reaction nicotinate beta-D-ribonucleotide + ATP + H(+) = deamido-NAD(+) + diphosphate. It participates in cofactor biosynthesis; NAD(+) biosynthesis; NAD(+) from nicotinamide D-ribonucleotide: step 1/1. The protein operates within cofactor biosynthesis; NAD(+) biosynthesis; deamido-NAD(+) from nicotinate D-ribonucleotide: step 1/1. Its activity is regulated as follows. Inhibited by P1-(adenosine-5')-P3-(nicotinamide-riboside-5')-triphosphate (Np3AD) and P1-(adenosine-5')-P4-(nicotinamide-riboside-5')-tetraphosphate (Np4AD). Nicotinamide/nicotinate-nucleotide adenylyltransferase that acts as an axon maintenance factor. Axon survival factor required for the maintenance of healthy axons: acts by delaying Wallerian axon degeneration, an evolutionarily conserved process that drives the loss of damaged axons. Catalyzes the formation of NAD(+) from nicotinamide mononucleotide (NMN) and ATP. Can also use the deamidated form; nicotinic acid mononucleotide (NaMN) as substrate but with a lower efficiency. Cannot use triazofurin monophosphate (TrMP) as substrate. Also catalyzes the reverse reaction, i.e. the pyrophosphorolytic cleavage of NAD(+). For the pyrophosphorolytic activity prefers NAD(+), NADH and NaAD as substrates and degrades nicotinic acid adenine dinucleotide phosphate (NHD) less effectively. Fails to cleave phosphorylated dinucleotides NADP(+), NADPH and NaADP(+). Also acts as an activator of ADP-ribosylation by supporting the catalytic activity of PARP16 and promoting mono-ADP-ribosylation of ribosomes by PARP16. May be involved in the maintenance of axonal integrity. The chain is Nicotinamide/nicotinic acid mononucleotide adenylyltransferase 2 (Nmnat2) from Rattus norvegicus (Rat).